We begin with the raw amino-acid sequence, 148 residues long: Lysozyme C (148 aa).

Positions Met1–Gly18 are cleaved as a signal peptide. One can recognise a C-type lysozyme domain in the interval Lys19–Val148. 4 disulfide bridges follow: Cys24-Cys146, Cys48-Cys134, Cys83-Cys99, and Cys95-Cys113. Catalysis depends on residues Glu53 and Asp71.

This sequence belongs to the glycosyl hydrolase 22 family. Monomer.

The protein resides in the secreted. It carries out the reaction Hydrolysis of (1-&gt;4)-beta-linkages between N-acetylmuramic acid and N-acetyl-D-glucosamine residues in a peptidoglycan and between N-acetyl-D-glucosamine residues in chitodextrins.. In terms of biological role, lysozymes have primarily a bacteriolytic function; those in tissues and body fluids are associated with the monocyte-macrophage system and enhance the activity of immunoagents. Also plays a role in digestion in this species. The polypeptide is Lysozyme C (LYZ) (Semnopithecus entellus (Northern plains gray langur)).